Here is a 374-residue protein sequence, read N- to C-terminus: Guanine nucleotide-binding protein subunit alpha-15 (374 aa).

Residues 41 to 374 enclose the G-alpha domain; it reads GELKLLLLGT…ARYLDEINLL (334 aa). Residues 44–57 form a G1 motif region; sequence KLLLLGTGESGKST. Residues 49 to 56, 183 to 189, 208 to 212, 277 to 280, and A346 each bind GTP; these read GTGESGKS, LRSRMPT, DVGGQ, and NKTD. The Mg(2+) site is built by S56 and T189. The tract at residues 181–189 is G2 motif; the sequence is DVLRSRMPT. A G3 motif region spans residues 204–213; it reads LRIVDVGGQK. Residues 273-280 form a G4 motif region; it reads ILFLNKTD. Residues 344–349 are G5 motif; that stretch reads TCATDT.

This sequence belongs to the G-alpha family. G(q) subfamily. In terms of assembly, g proteins are composed of 3 units; alpha, beta and gamma. The alpha chain contains the guanine nucleotide binding site.

Guanine nucleotide-binding proteins (G proteins) are involved as modulators or transducers in various transmembrane signaling systems. This Oryctolagus cuniculus (Rabbit) protein is Guanine nucleotide-binding protein subunit alpha-15 (GNA15).